Reading from the N-terminus, the 155-residue chain is Endoribonuclease YbeY (155 aa).

Positions 117, 121, and 127 each coordinate Zn(2+).

The protein belongs to the endoribonuclease YbeY family. It depends on Zn(2+) as a cofactor.

It localises to the cytoplasm. Its function is as follows. Single strand-specific metallo-endoribonuclease involved in late-stage 70S ribosome quality control and in maturation of the 3' terminus of the 16S rRNA. This is Endoribonuclease YbeY from Treponema denticola (strain ATCC 35405 / DSM 14222 / CIP 103919 / JCM 8153 / KCTC 15104).